Here is a 155-residue protein sequence, read N- to C-terminus: SsrA-binding protein (155 aa).

Residues 135–147 (TIKRRDQERDIKK) are compositionally biased toward basic and acidic residues. The tract at residues 135–155 (TIKRRDQERDIKKQMKHYNAR) is disordered.

Belongs to the SmpB family.

Its subcellular location is the cytoplasm. In terms of biological role, required for rescue of stalled ribosomes mediated by trans-translation. Binds to transfer-messenger RNA (tmRNA), required for stable association of tmRNA with ribosomes. tmRNA and SmpB together mimic tRNA shape, replacing the anticodon stem-loop with SmpB. tmRNA is encoded by the ssrA gene; the 2 termini fold to resemble tRNA(Ala) and it encodes a 'tag peptide', a short internal open reading frame. During trans-translation Ala-aminoacylated tmRNA acts like a tRNA, entering the A-site of stalled ribosomes, displacing the stalled mRNA. The ribosome then switches to translate the ORF on the tmRNA; the nascent peptide is terminated with the 'tag peptide' encoded by the tmRNA and targeted for degradation. The ribosome is freed to recommence translation, which seems to be the essential function of trans-translation. The chain is SsrA-binding protein from Streptococcus pyogenes serotype M3 (strain SSI-1).